We begin with the raw amino-acid sequence, 418 residues long: Serine hydroxymethyltransferase (418 aa).

(6S)-5,6,7,8-tetrahydrofolate-binding positions include Leu121 and 125–127; that span reads GHL. Lys230 carries the N6-(pyridoxal phosphate)lysine modification. (6S)-5,6,7,8-tetrahydrofolate contacts are provided by residues Glu246 and 355-357; that span reads SPF.

The protein belongs to the SHMT family. In terms of assembly, homodimer. Pyridoxal 5'-phosphate serves as cofactor.

It is found in the cytoplasm. It carries out the reaction (6R)-5,10-methylene-5,6,7,8-tetrahydrofolate + glycine + H2O = (6S)-5,6,7,8-tetrahydrofolate + L-serine. It functions in the pathway one-carbon metabolism; tetrahydrofolate interconversion. Its pathway is amino-acid biosynthesis; glycine biosynthesis; glycine from L-serine: step 1/1. Catalyzes the reversible interconversion of serine and glycine with tetrahydrofolate (THF) serving as the one-carbon carrier. This reaction serves as the major source of one-carbon groups required for the biosynthesis of purines, thymidylate, methionine, and other important biomolecules. Also exhibits THF-independent aldolase activity toward beta-hydroxyamino acids, producing glycine and aldehydes, via a retro-aldol mechanism. In Streptococcus pneumoniae serotype 2 (strain D39 / NCTC 7466), this protein is Serine hydroxymethyltransferase.